Here is a 129-residue protein sequence, read N- to C-terminus: Ribonuclease P protein component (129 aa).

It belongs to the RnpA family. Consists of a catalytic RNA component (M1 or rnpB) and a protein subunit.

The catalysed reaction is Endonucleolytic cleavage of RNA, removing 5'-extranucleotides from tRNA precursor.. Functionally, RNaseP catalyzes the removal of the 5'-leader sequence from pre-tRNA to produce the mature 5'-terminus. It can also cleave other RNA substrates such as 4.5S RNA. The protein component plays an auxiliary but essential role in vivo by binding to the 5'-leader sequence and broadening the substrate specificity of the ribozyme. In Corynebacterium jeikeium (strain K411), this protein is Ribonuclease P protein component.